A 739-amino-acid chain; its full sequence is Probable endo-1,3(4)-beta-glucanase An02g00850 (739 aa).

An N-terminal signal peptide occupies residues 1-24 (MPTSTLLWSVGSLALSSMVLPAAA). Positions 31–283 (ETWKGEDFLT…WAGGVYSTSG (253 aa)) constitute a GH16 domain. 2 N-linked (GlcNAc...) asparagine glycosylation sites follow: asparagine 59 and asparagine 74. The Nucleophile role is filled by glutamate 140. Glutamate 145 functions as the Proton donor in the catalytic mechanism. Asparagine 396 carries N-linked (GlcNAc...) asparagine glycosylation. Low complexity-rich tracts occupy residues 431–442 (SEATEASNSEGS), 452–499 (TGAS…AGAT), and 507–522 (GASG…SAAA). Residues 431-718 (SEATEASNSE…TPSTPVFTGG (288 aa)) are disordered. Residues asparagine 459 and asparagine 482 are each glycosylated (N-linked (GlcNAc...) asparagine). The segment covering 523-532 (TPSNVSSTGA) has biased composition (polar residues). Asparagine 526 and asparagine 537 each carry an N-linked (GlcNAc...) asparagine glycan. Residues 539–548 (SEDSSASSEA) show a composition bias toward polar residues. Positions 561–587 (GASAEANGNDSASSNAATASNVSGASA) are enriched in low complexity. Residues asparagine 569, asparagine 581, asparagine 592, and asparagine 620 are each glycosylated (N-linked (GlcNAc...) asparagine). Positions 597-641 (ASAGANAGSSAAPSSVSGASAEANGSEGSSSHSSGSQAGAHSYGS) are enriched in low complexity. Over residues 654-673 (PSSSSHAFATAPSSTGSSRV) the composition is skewed to polar residues. Over residues 674 to 713 (PTSAAAANNAAAATQGSSASGSNSGSSGHGSSSATTPSTP) the composition is skewed to low complexity. A lipid anchor (GPI-anchor amidated glycine) is attached at glycine 717. A propeptide spans 718–739 (GANKLTLGASSVLSVLAFALLA) (removed in mature form).

It belongs to the glycosyl hydrolase 16 family.

It is found in the cell membrane. It carries out the reaction Endohydrolysis of (1-&gt;3)- or (1-&gt;4)-linkages in beta-D-glucans when the glucose residue whose reducing group is involved in the linkage to be hydrolyzed is itself substituted at C-3.. Its function is as follows. Mixed-linked glucanase involved in the degradation of complex natural cellulosic substrates. The protein is Probable endo-1,3(4)-beta-glucanase An02g00850 of Aspergillus niger (strain ATCC MYA-4892 / CBS 513.88 / FGSC A1513).